The sequence spans 187 residues: UPF0301 protein Sputcn32_2681 (187 aa).

It belongs to the UPF0301 (AlgH) family.

This Shewanella putrefaciens (strain CN-32 / ATCC BAA-453) protein is UPF0301 protein Sputcn32_2681.